The following is a 509-amino-acid chain: Autophagy-related protein 16 (509 aa).

WD repeat units follow at residues 223–262 (AHEG…LIKS), 265–304 (GSLG…VRHT), 307–347 (GHTD…CTNT), 349–388 (LFTS…LLSE), 391–430 (GHSS…ICGT), 437–478 (RLAS…SILK), and 480–509 (QTSP…CTWT).

This sequence belongs to the WD repeat ATG16 family.

May play a role in autophagy. In Arabidopsis thaliana (Mouse-ear cress), this protein is Autophagy-related protein 16.